The following is a 310-amino-acid chain: AA9 family lytic polysaccharide monooxygenase A (310 aa).

The N-terminal stretch at 1-21 (MPSTKVAALSAVLALASTVAG) is a signal peptide. Positions 22 and 107 each coordinate Cu(2+). 2 cysteine pairs are disulfide-bonded: Cys77–Cys199 and Cys118–Cys122. Residues Asn121 and Asn159 are each glycosylated (N-linked (GlcNAc...) asparagine). Position 185 (His185) interacts with O2. Residue Tyr196 coordinates Cu(2+).

This sequence belongs to the polysaccharide monooxygenase AA9 family. The cofactor is Cu(2+).

The protein resides in the secreted. It catalyses the reaction [(1-&gt;4)-beta-D-glucosyl]n+m + reduced acceptor + O2 = 4-dehydro-beta-D-glucosyl-[(1-&gt;4)-beta-D-glucosyl]n-1 + [(1-&gt;4)-beta-D-glucosyl]m + acceptor + H2O.. Lytic polysaccharide monooxygenase (LPMO) that depolymerizes crystalline and amorphous polysaccharides via the oxidation of scissile alpha- or beta-(1-4)-glycosidic bonds, yielding C1, C4 as well as C6 oxidation products. Catalysis by LPMOs requires the reduction of the active-site copper from Cu(II) to Cu(I) by a reducing agent and H(2)O(2) or O(2) as a cosubstrate. Active on cellulose, but not on xylan, starch, or chitin. This is AA9 family lytic polysaccharide monooxygenase A from Talaromyces pinophilus (Penicillium pinophilum).